The sequence spans 126 residues: Large ribosomal subunit protein bL19 (126 aa).

It belongs to the bacterial ribosomal protein bL19 family.

Functionally, this protein is located at the 30S-50S ribosomal subunit interface and may play a role in the structure and function of the aminoacyl-tRNA binding site. In Bradyrhizobium diazoefficiens (strain JCM 10833 / BCRC 13528 / IAM 13628 / NBRC 14792 / USDA 110), this protein is Large ribosomal subunit protein bL19.